Reading from the N-terminus, the 377-residue chain is Nucleosome assembly protein 1;3 (377 aa).

A coiled-coil region spans residues 26–80 (VNVLKNKLQGLTGKHSNVLENLSPNVRKRVEVLREIQTQHDELEAKFFEERAALE). The short motif at 47–62 (LSPNVRKRVEVLREIQ) is the Nuclear export signal element. Residues 223–228 (KKKPKK) carry the Nuclear localization signal motif. The disordered stretch occupies residues 298 to 377 (EAAQDEDYID…GERPPECKQQ (80 aa)). Over residues 300 to 341 (AQDEDYIDLEDDEDEEDDEDEDEDEEDEEEEDEDEDDDDEDE) the composition is skewed to acidic residues. The segment covering 345-357 (KTKKKSSAGRKRS) has biased composition (basic residues). Residue Cys374 is modified to Cysteine methyl ester. Cys374 is lipidated: S-farnesyl cysteine. The propeptide at 375-377 (KQQ) is removed in mature form.

This sequence belongs to the nucleosome assembly protein (NAP) family. Can form homomeric and heteromeric protein complexes with NAP1;4. Binds histones H2A and H2B in vivo. Also able to bind histones H1 and H4 in vitro. Interacts with CYCB1;1 and with alpha tubulin.

The protein resides in the nucleus. It localises to the cytoplasm. May modulate chromatin structure by regulation of nucleosome assembly/disassembly. Could function together with B-type cyclins in the regulation of microtubule dynamics. The chain is Nucleosome assembly protein 1;3 (NAP1;3) from Nicotiana tabacum (Common tobacco).